An 816-amino-acid polypeptide reads, in one-letter code: Probable E3 ubiquitin-protein ligase hulA (816 aa).

Residues 1–112 (MGSNLPAQPN…QMGGDEMLTR (112 aa)) enclose the C2 domain. 2 disordered regions span residues 134–238 (NLST…WERR) and 253–353 (RTTT…YFVD). 4 stretches are compositionally biased toward polar residues: residues 151–168 (MQPSTSSGLVPQVSASTP), 177–202 (ADPTASNPSLHPQRVPSTTRPSSTIV), 217–226 (SRTNLSSFED), and 253–270 (RTTTWTRPSNNYNEQTSR). The 34-residue stretch at 229–262 (GRLPAGWERREDNLGRTYYVDHNTRTTTWTRPSN) folds into the WW 1 domain. The span at 279-294 (LERRAHQSRMLPEDRT) shows a compositional bias: basic and acidic residues. Positions 295–309 (GASSPNLQENQQQAQ) are enriched in polar residues. Over residues 310–333 (TPPAGGSASAVSMMATGATTAGTG) the composition is skewed to low complexity. WW domains lie at 333 to 366 (GELPPGWEQRTTPEGRPYFVDHNTRTTTWVDPRR) and 393 to 426 (GPLPSGWEMRLTNTARVYFVDHNTKTTTWDDPRL). In terms of domain architecture, HECT spans 482-816 (SASDLKKRLM…VEETLGFGQE (335 aa)). The Glycyl thioester intermediate role is filled by cysteine 784.

This sequence belongs to the RSP5/NEDD4 family. In terms of assembly, interacts with creD.

The protein resides in the cytoplasm. The catalysed reaction is S-ubiquitinyl-[E2 ubiquitin-conjugating enzyme]-L-cysteine + [acceptor protein]-L-lysine = [E2 ubiquitin-conjugating enzyme]-L-cysteine + N(6)-ubiquitinyl-[acceptor protein]-L-lysine.. It functions in the pathway protein modification; protein ubiquitination. E3 ubiquitin-protein ligase which accepts ubiquitin from an E2 ubiquitin-conjugating enzyme in the form of a thioester and then directly transfers the ubiquitin to targeted substrates. Probably involved in the regulatory network controlling carbon source utilization. The protein is Probable E3 ubiquitin-protein ligase hulA (hulA) of Aspergillus oryzae (strain ATCC 42149 / RIB 40) (Yellow koji mold).